Reading from the N-terminus, the 351-residue chain is Hydroxymethylglutaryl-CoA synthase (351 aa).

D30 contributes to the (3S)-3-hydroxy-3-methylglutaryl-CoA binding site. Residue E82 is the Proton donor/acceptor of the active site. 4 residues coordinate (3S)-3-hydroxy-3-methylglutaryl-CoA: C114, S155, T203, and H236. The active-site Acyl-thioester intermediate is the C114. H236 functions as the Proton donor/acceptor in the catalytic mechanism. R241 contacts CoA. The (3S)-3-hydroxy-3-methylglutaryl-CoA site is built by R245, N268, and S298.

The protein belongs to the thiolase-like superfamily. Archaeal HMG-CoA synthase family. In terms of assembly, interacts with acetoacetyl-CoA thiolase that catalyzes the precedent step in the pathway and with a DUF35 protein. The acetoacetyl-CoA thiolase/HMG-CoA synthase complex channels the intermediate via a fused CoA-binding site, which allows for efficient coupling of the endergonic thiolase reaction with the exergonic HMGCS reaction.

The enzyme catalyses acetoacetyl-CoA + acetyl-CoA + H2O = (3S)-3-hydroxy-3-methylglutaryl-CoA + CoA + H(+). The protein operates within metabolic intermediate biosynthesis; (R)-mevalonate biosynthesis; (R)-mevalonate from acetyl-CoA: step 2/3. In terms of biological role, catalyzes the condensation of acetyl-CoA with acetoacetyl-CoA to form 3-hydroxy-3-methylglutaryl-CoA (HMG-CoA). Functions in the mevalonate (MVA) pathway leading to isopentenyl diphosphate (IPP), a key precursor for the biosynthesis of isoprenoid compounds that are building blocks of archaeal membrane lipids. The protein is Hydroxymethylglutaryl-CoA synthase of Pyrobaculum neutrophilum (strain DSM 2338 / JCM 9278 / NBRC 100436 / V24Sta) (Thermoproteus neutrophilus).